The primary structure comprises 277 residues: Large ribosomal subunit protein uL2 (277 aa).

2 disordered regions span residues 37-60 and 223-265; these read KNST…GHKH and VVMN…KRTD. A compositionally biased stretch (polar residues) spans 39 to 49; that stretch reads STAGRNNNGHI. Residues 50-60 show a composition bias toward basic residues; that stretch reads TTRHKGGGHKH. The span at 229–244 shows a compositional bias: basic and acidic residues; it reads DHPHGGGEGRTGEARE.

It belongs to the universal ribosomal protein uL2 family. In terms of assembly, part of the 50S ribosomal subunit. Forms a bridge to the 30S subunit in the 70S ribosome.

Functionally, one of the primary rRNA binding proteins. Required for association of the 30S and 50S subunits to form the 70S ribosome, for tRNA binding and peptide bond formation. It has been suggested to have peptidyltransferase activity; this is somewhat controversial. Makes several contacts with the 16S rRNA in the 70S ribosome. The sequence is that of Large ribosomal subunit protein uL2 from Neisseria meningitidis serogroup A / serotype 4A (strain DSM 15465 / Z2491).